Reading from the N-terminus, the 301-residue chain is Nodulation protein D 3 (301 aa).

The 58-residue stretch at 6-63 (LDLNLLVVLDALLTARNLTAAASSINLSQPAMSAAVARLRNYFNDELFTMSGRERVLT) folds into the HTH lysR-type domain. Positions 23-43 (LTAAASSINLSQPAMSAAVAR) form a DNA-binding region, H-T-H motif.

It belongs to the LysR transcriptional regulatory family.

Its function is as follows. NodD regulates the expression of the nodABCFE genes which encode other nodulation proteins. NodD is also a negative regulator of its own expression. Binds flavonoids as inducers. In Mesorhizobium japonicum (strain LMG 29417 / CECT 9101 / MAFF 303099) (Mesorhizobium loti (strain MAFF 303099)), this protein is Nodulation protein D 3 (nodD3).